Consider the following 508-residue polypeptide: Bestrophin-2 (508 aa).

The Cytoplasmic segment spans residues 1 to 31; sequence MTVTYTARVANARFGGFSQLLLLWRGSIYKL. Residue Ala-10 participates in Ca(2+) binding. The helical transmembrane segment at 32–51 threads the bilayer; the sequence is LWRELLCFLGLYMALSAAYR. At 52 to 60 the chain is on the extracellular side; that stretch reads FLLAEEQKR. Residues 61–82 form a helical membrane-spanning segment; that stretch reads YFEKLVIYCDQYASLIPVSFVL. Residues 83-238 lie on the Cytoplasmic side of the membrane; it reads GFYVTLVVHR…WISIPLVYTQ (156 aa). Residues 239-255 traverse the membrane as a helical segment; the sequence is VVTIAVYSYFLACLIGR. Residues 256–274 lie on the Extracellular side of the membrane; it reads QFLDPAQGYKDHTLDLCVP. Residues 275–288 form a helical membrane-spanning segment; it reads IFTLLQFFFYAGWL. At 289-508 the chain is on the cytoplasmic side; it reads KVAEQLINPF…PIGEEEESPA (220 aa). Ca(2+) contacts are provided by Gln-293, Asn-296, Asp-301, and Asp-304. The segment at 455–508 is disordered; it reads LREPELEPPACPEPPAPIPGPTPEPFTTVSIPGPRAPAPPWLPSPIGEEEESPA. Pro residues-rich tracts occupy residues 461 to 478 and 488 to 497; these read EPPA…PTPE and PRAPAPPWLP.

Belongs to the anion channel-forming bestrophin (TC 1.A.46) family. Calcium-sensitive chloride channel subfamily. As to quaternary structure, pentamer. Interacts with GLUL; this interaction tethers a fraction of GLUL to the membrane, causing a decrease of cytosolic glutamine synthase (GS) activity and inhibits the chloride channel activity of BEST2 by affecting the gating at the aperture in the absence of intracellular glutamate. As to expression, expressed in mucin-secreting colonic goblet cells.

The protein resides in the cell membrane. Its subcellular location is the basolateral cell membrane. It carries out the reaction chloride(in) = chloride(out). The enzyme catalyses hydrogencarbonate(in) = hydrogencarbonate(out). It catalyses the reaction L-glutamate(out) = L-glutamate(in). The catalysed reaction is iodide(out) = iodide(in). It carries out the reaction L-glutamine(out) = L-glutamine(in). Its activity is regulated as follows. Chloride channel activity is allosterically inhibited by GLUL/glutamine synthase (GS) which affects the gating at the aperture in the absence of intracellular glutamate. Inhibitory effect of GLUL is relieved upon increasing of intracellular level of L-glutamate. Its function is as follows. Ligand-gated anion channel that allows the movement of anions across cell membranes when activated by calcium (Ca2+). Transports a large specter of anions, namely mediates the movement of chloride, L-glutamate and iodide. Calcium-binding triggers the dilation of the aperture, but calcium-dependent gating is only effective when the size of the passing anion is bigger than the closed aperture. Mediates the calcium-activated hydrogencarbonate movement and participates in colonic hydrogencarbonate secretion concomitant with mucin secretion. In non-pigmented epithelium (NPE), mediates the efflux of intracellular L-glutamate; binding of intracellular L-glutamate activates and open both the neck and the aperture of the channel, leading to L-glutamate exit promoting chloride influx movement from the extracellular side in trans. Also exhibits a directional permeability for intracellular glutamine, in a similar manner as for L-glutamate. This Mus musculus (Mouse) protein is Bestrophin-2.